The chain runs to 251 residues: Insulin-induced gene 1 protein (251 aa).

Topologically, residues 1–58 (MQTLEEHCWSCSCTRGRDKKGTKVSAWLARRVGKAMSSLNSLLSLAYSTLASSEGRSL) are cytoplasmic. A helical transmembrane segment spans residues 59–81 (IQRSLVLFTVGVFLALVLNLLQI). Topologically, residues 82-100 (QRNVTLFPEEVIATIFSSA) are extracellular. A helical membrane pass occupies residues 101–118 (WWVPPCCGTAAAVVGLLY). Over 119 to 133 (PCIDSRIGEPHKFKR) the chain is Cytoplasmic. Residues 134-156 (EWASVMRCIAVFVGINHASAKLD) form a helical membrane-spanning segment. Topologically, residues 157-159 (FAN) are extracellular. The chain crosses the membrane as a helical span at residues 160 to 178 (NVQLSLTLAALSLGLWWTF). The Cytoplasmic segment spans residues 179–183 (DRSRS). Residues 184–205 (GLGLGITIAFLATLITQFLVYN) traverse the membrane as a helical segment. The Extracellular portion of the chain corresponds to 206–219 (GVYQYTSPDFLYIR). The helical transmembrane segment at 220–237 (SWLPCIFFSGGVTVGNIG) threads the bilayer. Residues 238-251 (RQLAMGSSEKTHGD) lie on the Cytoplasmic side of the membrane. The short motif at 245–251 (SEKTHGD) is the KxHxx element.

The protein belongs to the INSIG family. Interacts with scap; interaction is direct and only takes place in the presence of sterols; it prevents interaction between scap and the coat protein complex II (COPII). Associates with the SCAP-SREBP complex; association is mediated via its interaction with scap and only takes place in the presence of sterols.

The protein localises to the endoplasmic reticulum membrane. Its function is as follows. Oxysterol-binding protein that mediates feedback control of cholesterol synthesis by controlling both endoplasmic reticulum to Golgi transport of scap and degradation of hmgcr. Acts as a negative regulator of cholesterol biosynthesis by mediating the retention of the SCAP-SREBP complex in the endoplasmic reticulum, thereby blocking the processing of sterol regulatory element-binding proteins (SREBPs). Binds oxysterol, including 25-hydroxycholesterol, regulating interaction with scap and retention of the SCAP-SREBP complex in the endoplasmic reticulum. In presence of oxysterol, interacts with scap, retaining the SCAP-SREBP complex in the endoplasmic reticulum, thereby preventing scap from escorting SREBPs to the Golgi. Sterol deprivation reduces oxysterol-binding, disrupting the interaction between insig1 and scap, thereby promoting Golgi transport of the SCAP-SREBP complex, followed by processing and nuclear translocation of SREBPs. Also regulates cholesterol synthesis by regulating degradation of hmgcr. In Xenopus laevis (African clawed frog), this protein is Insulin-induced gene 1 protein.